The sequence spans 150 residues: Ribonuclease pancreatic delta-type (150 aa).

Positions methionine 1–glycine 25 are cleaved as a signal peptide. A substrate-binding site is contributed by arginine 35. The active-site Proton acceptor is the histidine 37. 3 disulfide bridges follow: cysteine 51-cysteine 110, cysteine 65-cysteine 121, and cysteine 83-cysteine 136. Substrate is bound by residues lysine 66 to threonine 70, lysine 91, and arginine 111. Catalysis depends on histidine 145, which acts as the Proton donor.

It belongs to the pancreatic ribonuclease family. In terms of assembly, monomer.

It is found in the secreted. It carries out the reaction an [RNA] containing cytidine + H2O = an [RNA]-3'-cytidine-3'-phosphate + a 5'-hydroxy-ribonucleotide-3'-[RNA].. It catalyses the reaction an [RNA] containing uridine + H2O = an [RNA]-3'-uridine-3'-phosphate + a 5'-hydroxy-ribonucleotide-3'-[RNA].. In terms of biological role, endonuclease that catalyzes the cleavage of RNA on the 3' side of pyrimidine nucleotides. Acts on single-stranded and double-stranded RNA. This Rattus rattus (Black rat) protein is Ribonuclease pancreatic delta-type.